The chain runs to 308 residues: MIIVTGGFGMIGSNIVKALNEIGRKDILVVDNLKNGEKFVNLVDLDIADYCDKEDFIASIIAGDDFGEIDAVFHEGACSATTEWDGKYLMHNNYEYSKELLHFCLDHQIPFFYASSAATYGGRSDNFIEERKFEQPLNAYGYSKFLFDEYVRQVLPEADSPVCGFKYFNVYGPREQHKGSMASVAFHLNNQMLKGENPKLFEGSETFLRDFVYVEDVAKVNIWAWQNGISGIYNLGTGKAESFQAVAQAVIDFHGKGEIEKIPFPDHLKSRYQTFTQADLTKLRAAGYTGTFKTVAEGTKEYMAWLNR.

Residues 10-11, 31-32, K38, K53, 75-79, and N92 each bind NADP(+); these read MI, DN, and EGACS. Y140 acts as the Proton acceptor in catalysis. K144 contacts NADP(+). N169 is a substrate binding site. V170 and K178 together coordinate NADP(+). The active-site Proton acceptor is the K178. Substrate is bound by residues S180, H187, 201-204, R209, and Y272; that span reads FEGS.

It belongs to the NAD(P)-dependent epimerase/dehydratase family. HldD subfamily. Homopentamer. NADP(+) is required as a cofactor.

The catalysed reaction is ADP-D-glycero-beta-D-manno-heptose = ADP-L-glycero-beta-D-manno-heptose. It participates in nucleotide-sugar biosynthesis; ADP-L-glycero-beta-D-manno-heptose biosynthesis; ADP-L-glycero-beta-D-manno-heptose from D-glycero-beta-D-manno-heptose 7-phosphate: step 4/4. Its function is as follows. Catalyzes the interconversion between ADP-D-glycero-beta-D-manno-heptose and ADP-L-glycero-beta-D-manno-heptose via an epimerization at carbon 6 of the heptose. The polypeptide is ADP-L-glycero-D-manno-heptose-6-epimerase (Actinobacillus pleuropneumoniae serotype 5b (strain L20)).